The sequence spans 552 residues: Glutamine-dependent NAD(+) synthetase (552 aa).

The CN hydrolase domain occupies 11–253; the sequence is LRIAMAQFDF…DQWLVVDYAA (243 aa). Residue E52 is the Proton acceptor; for glutaminase activity of the active site. Catalysis depends on K119, which acts as the For glutaminase activity. Position 125 (Y125) interacts with L-glutamine. C157 functions as the Nucleophile; for glutaminase activity in the catalytic mechanism. Positions 183 and 189 each coordinate L-glutamine. Residues 275–552 form a ligase region; that stretch reads AWRAVVRGLK…YPITNGYSGQ (278 aa). 298-305 is a binding site for ATP; it reads GLSGGIDS. Deamido-NAD(+) is bound at residue N381. ATP is bound at residue T405. 2 residues coordinate deamido-NAD(+): E410 and K522.

The protein in the C-terminal section; belongs to the NAD synthetase family.

It carries out the reaction deamido-NAD(+) + L-glutamine + ATP + H2O = L-glutamate + AMP + diphosphate + NAD(+) + H(+). The protein operates within cofactor biosynthesis; NAD(+) biosynthesis; NAD(+) from deamido-NAD(+) (L-Gln route): step 1/1. Functionally, catalyzes the ATP-dependent amidation of deamido-NAD to form NAD. Uses L-glutamine as a nitrogen source. In Xanthomonas campestris pv. campestris (strain 8004), this protein is Glutamine-dependent NAD(+) synthetase.